We begin with the raw amino-acid sequence, 457 residues long: Cysteine--tRNA ligase (457 aa).

Cys-28 is a Zn(2+) binding site. Positions Met-30–His-40 match the 'HIGH' region motif. Zn(2+) is bound by residues Cys-209, His-234, and Glu-238. The 'KMSKS' region motif lies at Lys-266 to Ser-270. Lys-269 contacts ATP.

Belongs to the class-I aminoacyl-tRNA synthetase family. Monomer. The cofactor is Zn(2+).

Its subcellular location is the cytoplasm. The catalysed reaction is tRNA(Cys) + L-cysteine + ATP = L-cysteinyl-tRNA(Cys) + AMP + diphosphate. This chain is Cysteine--tRNA ligase, found in Chromobacterium violaceum (strain ATCC 12472 / DSM 30191 / JCM 1249 / CCUG 213 / NBRC 12614 / NCIMB 9131 / NCTC 9757 / MK).